The sequence spans 334 residues: DNA-directed RNA polymerase subunit alpha (334 aa).

The interval 1–233 (MADQTISNVL…NLFTPLVSQE (233 aa)) is alpha N-terminal domain (alpha-NTD). The tract at residues 263-334 (DNENSYNLYN…QLKKRFKIQL (72 aa)) is alpha C-terminal domain (alpha-CTD).

The protein belongs to the RNA polymerase alpha chain family. In terms of assembly, in plastids the minimal PEP RNA polymerase catalytic core is composed of four subunits: alpha, beta, beta', and beta''. When a (nuclear-encoded) sigma factor is associated with the core the holoenzyme is formed, which can initiate transcription.

Its subcellular location is the plastid. It localises to the chloroplast. The enzyme catalyses RNA(n) + a ribonucleoside 5'-triphosphate = RNA(n+1) + diphosphate. In terms of biological role, DNA-dependent RNA polymerase catalyzes the transcription of DNA into RNA using the four ribonucleoside triphosphates as substrates. The chain is DNA-directed RNA polymerase subunit alpha from Chaetosphaeridium globosum (Charophycean green alga).